The following is a 177-amino-acid chain: Ubiquinol-cytochrome c reductase iron-sulfur subunit (177 aa).

Residues 18 to 38 traverse the membrane as a helical segment; it reads MVLTASSVAAIGAVCTLWPLV. The region spanning 88 to 175 is the Rieske domain; sequence ARAVKMSELI…YTFISDKKIR (88 aa). The [2Fe-2S] cluster site is built by cysteine 120, histidine 122, cysteine 139, and histidine 142. Cysteine 125 and cysteine 141 are oxidised to a cystine.

It belongs to the Rieske iron-sulfur protein family. The main subunits of complex b-c1 are: cytochrome b, cytochrome c1 and the Rieske protein. [2Fe-2S] cluster is required as a cofactor.

The protein localises to the cell membrane. The catalysed reaction is a quinol + 2 Fe(III)-[cytochrome c](out) = a quinone + 2 Fe(II)-[cytochrome c](out) + 2 H(+)(out). Functionally, component of the ubiquinol-cytochrome c reductase complex (complex III or cytochrome b-c1 complex), which is a respiratory chain that generates an electrochemical potential coupled to ATP synthesis. This chain is Ubiquinol-cytochrome c reductase iron-sulfur subunit (petA), found in Rickettsia conorii (strain ATCC VR-613 / Malish 7).